The primary structure comprises 328 residues: MTDTPKPPRKKPQRPAKPAAPREKATLHPRNRHQGHYDFPKLIKSSPELAAFVILNPYGKESIDFANPQAVRVFNRALLKAFYGIAHWDIPADYLCPPIPGRADYLHFLADVLAEDHEGVIPRGASVKALDIGTGANCIYPLLGHSDYGWQFVGSDIDSTAVAAATAIVKANGLHKAISVRLQGNRKQILLGLCDSNERFDVSLCNPPFHASLDEAQRGSQRKWRALGKADPKRKLPVLNFGGQSQELWCEGGEIGFVTQLIQESARLPGLVVWFSTLVSKASNLPPIQSALKKAGALEVKVVEMGQGQKQSRFVAWTFLDKAQRTPG.

Residues 1–38 (MTDTPKPPRKKPQRPAKPAAPREKATLHPRNRHQGHYD) are disordered.

The protein belongs to the methyltransferase superfamily. METTL16/RlmF family.

Its subcellular location is the cytoplasm. It carries out the reaction adenosine(1618) in 23S rRNA + S-adenosyl-L-methionine = N(6)-methyladenosine(1618) in 23S rRNA + S-adenosyl-L-homocysteine + H(+). Functionally, specifically methylates the adenine in position 1618 of 23S rRNA. This is Ribosomal RNA large subunit methyltransferase F from Pseudomonas syringae pv. tomato (strain ATCC BAA-871 / DC3000).